A 171-amino-acid chain; its full sequence is Co-chaperone protein HscB homolog (171 aa).

The J domain occupies 2 to 74; sequence NHFELFGLPN…VTRAEYILSE (73 aa).

It belongs to the HscB family. In terms of assembly, interacts with HscA and stimulates its ATPase activity.

In terms of biological role, co-chaperone involved in the maturation of iron-sulfur cluster-containing proteins. Seems to help targeting proteins to be folded toward HscA. In Aliivibrio salmonicida (strain LFI1238) (Vibrio salmonicida (strain LFI1238)), this protein is Co-chaperone protein HscB homolog.